We begin with the raw amino-acid sequence, 161 residues long: MLSPKRTKFRKQQRGRMRGVATRGNKIAFGQFALQAQDCGWVTSRQIEASRRAMTRYVKRGGQIWIRIFPDKPVTMRPAETRMGSGKGNPEFWVAVVKPGRILFEMGGDEITEAIAKEAMRLAQYKLPVKTKFISLDEDLNKGNYKPAKTPVTADDSESSS.

A disordered region spans residues 140 to 161; it reads LNKGNYKPAKTPVTADDSESSS.

This sequence belongs to the universal ribosomal protein uL16 family. Part of the 50S ribosomal subunit.

Binds 23S rRNA and is also seen to make contacts with the A and possibly P site tRNAs. The protein is Large ribosomal subunit protein uL16 of Prochlorococcus marinus (strain NATL2A).